A 269-amino-acid chain; its full sequence is Phosphatidylglycerol--prolipoprotein diacylglyceryl transferase (269 aa).

7 consecutive transmembrane segments (helical) span residues 17–37 (LKIH…WLLA), 56–76 (LVFW…VLFY), 92–112 (WKGG…ALWF), 120–140 (FFEL…AGRI), 174–194 (PSQL…LWLY), 202–222 (MAVS…VEFV), and 237–257 (LTMG…LIWL). Residue R139 coordinates a 1,2-diacyl-sn-glycero-3-phospho-(1'-sn-glycerol).

This sequence belongs to the Lgt family.

The protein localises to the cell inner membrane. It catalyses the reaction L-cysteinyl-[prolipoprotein] + a 1,2-diacyl-sn-glycero-3-phospho-(1'-sn-glycerol) = an S-1,2-diacyl-sn-glyceryl-L-cysteinyl-[prolipoprotein] + sn-glycerol 1-phosphate + H(+). It participates in protein modification; lipoprotein biosynthesis (diacylglyceryl transfer). In terms of biological role, catalyzes the transfer of the diacylglyceryl group from phosphatidylglycerol to the sulfhydryl group of the N-terminal cysteine of a prolipoprotein, the first step in the formation of mature lipoproteins. The protein is Phosphatidylglycerol--prolipoprotein diacylglyceryl transferase of Pseudomonas putida (strain W619).